Reading from the N-terminus, the 324-residue chain is Glyoxylate/hydroxypyruvate reductase B (324 aa).

Active-site residues include Arg-237 and Glu-266. His-285 serves as the catalytic Proton donor.

Belongs to the D-isomer specific 2-hydroxyacid dehydrogenase family. GhrB subfamily. Homodimer.

It is found in the cytoplasm. The catalysed reaction is glycolate + NADP(+) = glyoxylate + NADPH + H(+). The enzyme catalyses (R)-glycerate + NAD(+) = 3-hydroxypyruvate + NADH + H(+). It catalyses the reaction (R)-glycerate + NADP(+) = 3-hydroxypyruvate + NADPH + H(+). In terms of biological role, catalyzes the NADPH-dependent reduction of glyoxylate and hydroxypyruvate into glycolate and glycerate, respectively. This chain is Glyoxylate/hydroxypyruvate reductase B, found in Shigella boydii serotype 4 (strain Sb227).